The sequence spans 416 residues: Squamosa promoter-binding-like protein 8 (416 aa).

Residues 11-51 (SSCDDFGYNATPPPPPSLLPIMDQDGGGGSIQRDHHQHHNH) are disordered. The SBP-type zinc finger occupies 182–260 (PPRCQAEGCK…ADHNRRRRKS (79 aa)). Residues Cys-185, Cys-190, Cys-207, His-210, Cys-227, Cys-230, His-234, and Cys-246 each coordinate Zn(2+). The Bipartite nuclear localization signal signature appears at 243–259 (KKSCRKRLADHNRRRRK). The interval 250–299 (LADHNRRRRKSKPSDGEHSGEKRRAQANKSAATKDKAGSSSKNAGIGDGF) is disordered. Over residues 261 to 273 (KPSDGEHSGEKRR) the composition is skewed to basic and acidic residues.

As to expression, expressed in stems, leaf sheaths, and young panicles. Weakly expressed in ligules, auricles, and leaf sheaths at the basal region.

It localises to the nucleus. Functionally, probable transcription factor that plays an important role in building the laminar joint between leaf blade and leaf sheath boundary, thereby controlling ligule and auricle development. The protein is Squamosa promoter-binding-like protein 8 (SPL8) of Oryza sativa subsp. japonica (Rice).